We begin with the raw amino-acid sequence, 338 residues long: Malate dehydrogenase, mitochondrial (338 aa).

Residues 1–24 (MLSALARPAGAALRRSFSTSXQNN) constitute a mitochondrion transit peptide. NAD(+) is bound by residues 31–37 (GASGGIG) and Asp57. Ser33 is a glycosylation site (O-linked (GlcNAc) serine). Residues Lys78 and Lys91 each carry the N6-acetyllysine; alternate modification. Lys78 and Lys91 each carry N6-succinyllysine; alternate. Positions 104 and 110 each coordinate substrate. NAD(+)-binding positions include Asn117 and 140 to 142 (ISN). Asn142 provides a ligand contact to substrate. An N6-acetyllysine modification is found at Lys165. Arg176 is a substrate binding site. Lys185 is modified (N6-acetyllysine; alternate). Position 185 is an N6-succinyllysine; alternate (Lys185). His200 serves as the catalytic Proton acceptor. N6-succinyllysine is present on Lys203. N6-acetyllysine; alternate is present on residues Lys215 and Lys239. Residues Lys215 and Lys239 each carry the N6-succinyllysine; alternate modification. Lys239 carries the N6-malonyllysine; alternate modification. Ser246 bears the Phosphoserine mark. Met251 contributes to the NAD(+) binding site. Lys269 carries the post-translational modification N6-succinyllysine. 5 positions are modified to N6-acetyllysine; alternate: Lys296, Lys301, Lys307, Lys314, and Lys324. Lys296, Lys301, Lys307, Lys314, and Lys324 each carry N6-succinyllysine; alternate. Lys307 is modified (N6-malonyllysine; alternate). Ser326 carries the phosphoserine modification. N6-acetyllysine; alternate occurs at positions 328, 329, and 335. The residue at position 328 (Lys328) is an N6-succinyllysine; alternate. Lys329 is subject to N6-malonyllysine; alternate. An N6-succinyllysine; alternate modification is found at Lys335.

It belongs to the LDH/MDH superfamily. MDH type 1 family. In terms of assembly, homodimer. Acetylation is enhanced after treatment either with trichostin A (TCA) or with nicotinamide (NAM) with the appearance of tri- and tetraacetylations. Glucose also increases acetylation.

The protein resides in the mitochondrion matrix. The enzyme catalyses (S)-malate + NAD(+) = oxaloacetate + NADH + H(+). With respect to regulation, enzyme activity is enhanced by acetylation. The polypeptide is Malate dehydrogenase, mitochondrial (MDH2) (Sus scrofa (Pig)).